The primary structure comprises 359 residues: Peptide chain release factor 1 (359 aa).

At Gln235 the chain carries N5-methylglutamine.

This sequence belongs to the prokaryotic/mitochondrial release factor family. Post-translationally, methylated by PrmC. Methylation increases the termination efficiency of RF1.

The protein resides in the cytoplasm. In terms of biological role, peptide chain release factor 1 directs the termination of translation in response to the peptide chain termination codons UAG and UAA. The chain is Peptide chain release factor 1 from Chelativorans sp. (strain BNC1).